The chain runs to 252 residues: Flagellar L-ring protein (252 aa).

Positions 1-25 are cleaved as a signal peptide; that stretch reads MLKLASLNRIVLTGTLLAAAGLASG. The N-palmitoyl cysteine moiety is linked to residue Cys-26. Cys-26 carries S-diacylglycerol cysteine lipidation.

It belongs to the FlgH family. The basal body constitutes a major portion of the flagellar organelle and consists of four rings (L,P,S, and M) mounted on a central rod.

The protein resides in the cell outer membrane. It is found in the bacterial flagellum basal body. Its function is as follows. Assembles around the rod to form the L-ring and probably protects the motor/basal body from shearing forces during rotation. The polypeptide is Flagellar L-ring protein (Nitrobacter winogradskyi (strain ATCC 25391 / DSM 10237 / CIP 104748 / NCIMB 11846 / Nb-255)).